A 448-amino-acid polypeptide reads, in one-letter code: Mitochondrial distribution and morphology protein 10 (448 aa).

It belongs to the MDM10 family. As to quaternary structure, component of the ER-mitochondria encounter structure (ERMES) or MDM complex, composed of MMM1, MDM10, MDM12 and MDM34. Associates with the mitochondrial outer membrane sorting assembly machinery SAM(core) complex.

Its subcellular location is the mitochondrion outer membrane. Its function is as follows. Component of the ERMES/MDM complex, which serves as a molecular tether to connect the endoplasmic reticulum and mitochondria. Components of this complex are involved in the control of mitochondrial shape and protein biogenesis and may function in phospholipid exchange. MDM10 is involved in the late assembly steps of the general translocase of the mitochondrial outer membrane (TOM complex). Functions in the TOM40-specific route of the assembly of outer membrane beta-barrel proteins, including the association of TOM40 with the receptor TOM22 and small TOM proteins. Can associate with the SAM(core) complex as well as the MDM12-MMM1 complex, both involved in late steps of the major beta-barrel assembly pathway, that is responsible for biogenesis of all outer membrane beta-barrel proteins. May act as a switch that shuttles between both complexes and channels precursor proteins into the TOM40-specific pathway. Plays a role in mitochondrial morphology and in the inheritance of mitochondria. In Podospora anserina (strain S / ATCC MYA-4624 / DSM 980 / FGSC 10383) (Pleurage anserina), this protein is Mitochondrial distribution and morphology protein 10.